We begin with the raw amino-acid sequence, 241 residues long: Large ribosomal subunit protein uL2 (241 aa).

The segment covering 1-12 has biased composition (basic residues); that stretch reads MGKRLISQRRGR. 2 disordered regions span residues 1–21 and 200–241; these read MGKR…RSAS and AVDH…GKRR.

It belongs to the universal ribosomal protein uL2 family. Part of the 50S ribosomal subunit. Forms a bridge to the 30S subunit in the 70S ribosome.

In terms of biological role, one of the primary rRNA binding proteins. Required for association of the 30S and 50S subunits to form the 70S ribosome, for tRNA binding and peptide bond formation. It has been suggested to have peptidyltransferase activity; this is somewhat controversial. Makes several contacts with the 16S rRNA in the 70S ribosome. The sequence is that of Large ribosomal subunit protein uL2 from Methanothermobacter thermautotrophicus (strain ATCC 29096 / DSM 1053 / JCM 10044 / NBRC 100330 / Delta H) (Methanobacterium thermoautotrophicum).